The following is a 728-amino-acid chain: Ophiobolin F synthase oblA (728 aa).

The tract at residues 1-322 is (7Z)-ophiobola-7,19-dien-3-ol synthase; it reads MEYKYSTIVD…RYHFPGRWNE (322 aa). The Mg(2+) site is built by Asp-93 and Asp-97. Asp-93 is a binding site for substrate. A DDXXD 1 motif is present at residues 93 to 97; that stretch reads DDEID. Substrate is bound by residues 182-185, Asn-226, 230-234, and 313-314; these read RCMD, SYEKE, and RY. An NSE/DTE motif is present at residues 226 to 234; sequence NDLFSYEKE. The geranylfarnesyl diphosphate synthase stretch occupies residues 323 to 728; the sequence is LQKLRAEHGI…LRLMVDMLKV (406 aa). Residues 362–371 show a composition bias toward low complexity; that stretch reads GINGTNGVNG. A disordered region spans residues 362–394; it reads GINGTNGVNGKRNRDEDGDENDARINGNGFKKP. Residues Lys-439, Arg-442, and His-471 each coordinate isopentenyl diphosphate. Mg(2+)-binding residues include Asp-478 and Asp-482. Positions 478–482 match the DDXXD 2 motif; that stretch reads DDIED. Arg-487 contacts dimethylallyl diphosphate. Isopentenyl diphosphate is bound at residue Arg-488. Dimethylallyl diphosphate is bound by residues Lys-565, Thr-566, Gln-604, Asn-611, Lys-621, and Lys-631.

The protein in the N-terminal section; belongs to the terpene synthase family. In the C-terminal section; belongs to the FPP/GGPP synthase family. Mg(2+) serves as cofactor.

The enzyme catalyses isopentenyl diphosphate + (2E,6E)-farnesyl diphosphate = (2E,6E,10E)-geranylgeranyl diphosphate + diphosphate. It carries out the reaction isopentenyl diphosphate + (2E,6E,10E)-geranylgeranyl diphosphate = (2E,6E,10E,14E)-geranylfarnesyl diphosphate + diphosphate. It catalyses the reaction (2E,6E,10E,14E)-geranylfarnesyl diphosphate + H2O = ophiobolin F + diphosphate. It participates in secondary metabolite biosynthesis; terpenoid biosynthesis. Functionally, bifunctional sesterterpene synthase; part of the gene cluster that mediates the biosynthesis of the sesterterpenes ophiobolins, fungal phytotoxins with potential anti-cancer activities. The first step of the pathway is performed by the sesterterpene synthase oblA that possesses both prenyl transferase and terpene cyclase activity, converting isopentenyl diphosphate and dimethylallyl diphosphate into geranylfarnesyl diphosphate (GFPP) and further converting GFPP into ophiobolin F, respectively. Other sesterterpenoids (C(25) terpenoids) are found as minor products of oblA. The cytochrome P450 monooxygenase oblB then catalyzes a four-step oxidative transformation of ophiobolin F to yield ophiobolin C. The function of the cytochrome P450 monooxygenase oblE has still to be determined. The chain is Ophiobolin F synthase oblA from Emericella variicolor (Aspergillus stellatus).